The following is a 3010-amino-acid chain: Genome polyprotein (3010 aa).

Residue S2 is modified to N-acetylserine; by host. Positions 2–23 (STNPKPQRKTKRNTNRRPQDVK) are interaction with STAT1. Residues 2 to 58 (STNPKPQRKTKRNTNRRPQDVKFPGGGQIVGGVYLLPRRGPRLGVRATRKTSERSQP) are interaction with EIF2AK2/PKR. An interaction with DDX3X region spans residues 2–59 (STNPKPQRKTKRNTNRRPQDVKFPGGGQIVGGVYLLPRRGPRLGVRATRKTSERSQPR). The tract at residues 2 to 75 (STNPKPQRKT…PKARQPEGRA (74 aa)) is disordered. Residues 2 to 168 (STNPKPQRKT…EDGVNYATGN (167 aa)) are Cytoplasmic-facing. 2 short sequence motifs (nuclear localization signal) span residues 5-13 (PKPQRKTKR) and 38-43 (PRRGPR). The span at 7 to 16 (PQRKTKRNTN) shows a compositional bias: basic residues. Residues 32–47 (GGVYLLPRRGPRLGVR) are compositionally biased toward low complexity. Phosphoserine; by host is present on S53. 2 consecutive short sequence motifs (nuclear localization signal) follow at residues 58–64 (PRGRRQP) and 66–71 (PKARQP). A Phosphoserine; by host modification is found at S99. Residues 112 to 152 (PRRRSRNLGKVIDTLTCGFADLMGYIPLVGAPLGGAARALA) form an important for endoplasmic reticulum and mitochondrial localization region. S116 carries the phosphoserine; by host PKA modification. Residues 122–173 (VIDTLTCGFADLMGYIPLVGAPLGGAARALAHGVRVLEDGVNYATGNLPGCS) are interaction with APOA2. The important for lipid droplets localization stretch occupies residues 164–167 (YATG). Residues 169–189 (LPGCSFSIFLLALLSCLTIPA) traverse the membrane as a helical segment. Residues 178 to 191 (LLALLSCLTIPASA) constitute a propeptide, ER anchor for the core protein, removed in mature form by host signal peptidase. Topologically, residues 190–358 (SAYEVRNVSG…AGAHWGVLAG (169 aa)) are lumenal. Residues N196, N209, N234, and N250 are each glycosylated (N-linked (GlcNAc...) asparagine; by host). The important for fusion stretch occupies residues 265-296 (LVGAAALCSAMYVGDLCGSVFLVAQLFTFSPR). N-linked (GlcNAc...) asparagine; by host glycosylation is present at N305. Residues 359–379 (LAYYSMVGNWAKVLIVMLLFA) form a helical membrane-spanning segment. Residues 380–725 (GVDGGTYVTG…WEYVLLLFLL (346 aa)) lie on the Lumenal side of the membrane. An HVR1 region spans residues 385-411 (TYVTGGTMAKNTLGITSLFSPGSSQKI). N417 carries an N-linked (GlcNAc...) asparagine; by host glycan. 3 N-linked (GlcNAc...) (high mannose) asparagine; by host glycosylation sites follow: N423, N430, and N448. 4 cysteine pairs are disulfide-bonded: C429/C552, C452/C459, C486/C494, and C503/C508. Residues 474–482 (YNESHSSDQ) are HVR2. Residues 480–493 (SDQRPYCWHYAPRP) form a CD81-binding 1 region. A glycan (N-linked (GlcNAc...) (high mannose) asparagine; by host) is linked at N532. Residues 544 to 551 (PPQGNWFG) form a CD81-binding 2 region. N-linked (GlcNAc...) (high mannose) asparagine; by host glycosylation is present at N556. The cysteines at positions 564 and 569 are disulfide-linked. N576 carries an N-linked (GlcNAc...) (high mannose) asparagine; by host glycan. Cystine bridges form between C581–C585, C597–C620, and C607–C644. Residues N623 and N645 are each glycosylated (N-linked (GlcNAc...) (high mannose) asparagine; by host). C652 and C677 are oxidised to a cystine. Positions 660–671 (SELSPLLLSTTE) are EIF2AK2/eIF2-alpha phosphorylation homology domain (PePHD). The chain crosses the membrane as a helical span at residues 726-746 (LADARVCACLWMMLLIAQAEA). Over 747–757 (ALENLVVLNAA) the chain is Lumenal. Residues 758–778 (SVAGAHGILSFLVFFCAAWYI) traverse the membrane as a helical segment. Topologically, residues 779 to 781 (KGR) are cytoplasmic. A helical transmembrane segment spans residues 782–803 (LVPGAAYALYGVWPLLLLLLAL). The Lumenal portion of the chain corresponds to 804-813 (PPRAYAMDRE). A helical transmembrane segment spans residues 814 to 834 (MAASCGGAVFVGLILLTLSPH). Residues 835 to 838 (YKLF) are Cytoplasmic-facing. A helical membrane pass occupies residues 839 to 859 (LARLIWWLQYFITRAEAHLQV). Residues 860 to 881 (WIPPLNVRGGRDAVILLTCAIH) are Lumenal-facing. The helical transmembrane segment at 882 to 902 (PELIFTITKILLAILGPLMVL) threads the bilayer. The Peptidase C18 domain maps to 903 to 1026 (QAGITKVPYF…SLEGQGWRLL (124 aa)). Residues 903 to 1657 (QAGITKVPYF…CMSADLEVVT (755 aa)) lie on the Cytoplasmic side of the membrane. The interval 904–1206 (AGITKVPYFV…PVESMETTMR (303 aa)) is protease NS2-3. C922 carries S-palmitoyl cysteine; by host lipidation. Residues 929 to 949 (AGGHYVQMALMKLAALTGTYV) form an interaction with host SCPS1 region. Catalysis depends on for protease NS2 activity; shared with dimeric partner residues H952, E972, and C993. The 182-residue stretch at 1027 to 1208 (APITAYSQQT…ESMETTMRSP (182 aa)) folds into the Peptidase S29 domain. Residues H1083 and D1107 each act as charge relay system; for serine protease NS3 activity in the active site. Zn(2+)-binding residues include C1123 and C1125. Catalysis depends on S1165, which acts as the Charge relay system; for serine protease NS3 activity. Zn(2+) is bound by residues C1171 and H1175. A Helicase ATP-binding domain is found at 1217–1369 (PAVPQTFQVA…PNIEEVALSS (153 aa)). 1230-1237 (APTGSGKS) serves as a coordination point for ATP. Mg(2+) is bound by residues S1237 and E1317. A DECH box motif is present at residues 1316–1319 (DECH). The RNA-binding stretch occupies residues 1486 to 1497 (QRRGRTGRGRMG). A helical transmembrane segment spans residues 1658–1678 (STWVLVGGVLAALAAYCLTTG). The tract at residues 1679 to 1690 (SVVIVGRIILSG) is NS3-binding. Topologically, residues 1679-1805 (SVVIVGRIIL…SITSPLTTQH (127 aa)) are cytoplasmic. The helical transmembrane segment at 1806-1826 (TLLFNILGGWVAAQLAPPSAA) threads the bilayer. The Lumenal portion of the chain corresponds to 1827–1828 (SA). The chain crosses the membrane as a helical span at residues 1829–1849 (FVGAGIAGAAVGSIGLGKVLV). The tract at residues 1833–1861 (GIAGAAVGSIGLGKVLVDILAGYGAGVAG) is glycine zipper. D1850 is a topological domain (cytoplasmic). The helical transmembrane segment at 1851 to 1871 (ILAGYGAGVAGALVAFKVMSG) threads the bilayer. Over 1872 to 1881 (EMPSTEDLVN) the chain is Lumenal. A helical membrane pass occupies residues 1882–1902 (LLPAILSPGALVVGVVCAAIL). Residues 1903 to 1972 (RRHVGPGEGA…WINEDCSTPC (70 aa)) lie on the Cytoplasmic side of the membrane. 2 S-palmitoyl cysteine; by host lipidation sites follow: C1968 and C1972. Residues 1973 to 2003 (SGSWLRDVWDWICTVLTDFKTWLQSKLLPRL) lie within the membrane without spanning it. The membrane-binding stretch occupies residues 1978–1998 (RDVWDWICTVLTDFKTWLQSK). The Cytoplasmic portion of the chain corresponds to 2004 to 2989 (PGVPFFSCQR…YHSLSRARPR (986 aa)). The tract at residues 2005–2221 (GVPFFSCQRG…KATCTTRHDS (217 aa)) is RNA-binding. Zn(2+) is bound by residues C2011, C2029, C2031, and C2052. The interval 2120-2208 (EFFTEVDGVR…ASSSASQLSA (89 aa)) is FKBP8-binding. Residues 2120 to 2332 (EFFTEVDGVR…PIPPPRRKRT (213 aa)) form a transcriptional activation region. Residues 2135–2139 (PACKP) form an interaction with non-structural protein 4A region. Residues 2187–2219 (KRRLARGSPPSLASSSASQLSAPSLKATCTTRH) are disordered. The interaction with host SKP2 stretch occupies residues 2189-2441 (RLARGSPPSL…PCAAEETKLP (253 aa)). S2194 is modified (phosphoserine; by host; in p56). The segment covering 2194–2211 (SPPSLASSSASQLSAPSL) has biased composition (low complexity). At S2197 the chain carries Phosphoserine; by host; in p58. Residue S2201 is modified to Phosphoserine; by host; in p56 and p58, regulates intracellular NS5A distribution. Phosphoserine; by host; in p58 is present on residues S2204, S2207, and S2210. ISDR regions lie at residues 2206-2245 (LSAPSLKATCTTRHDSPDADLIEANLLWRQEMGGNITRVE) and 2210-2249 (SLKATCTTRHDSPDADLIEANLLWRQEMGGNITRVESENK). An EIF2AK2/PKR-binding region spans residues 2210-2275 (SLKATCTTRH…REVSVPAEIL (66 aa)). Positions 2249–2306 (KVVILDSFEPLQAEEDEREVSVPAEILRRSRKFPRAMPIWARPDYNPPLLESWKDPDY) are NS4B-binding. The short motif at 2322–2325 (PPIP) is the SH3-binding element. The Nuclear localization signal signature appears at 2326–2334 (PPRRKRTVV). An interaction with host IFI27 region spans residues 2332-2441 (TVVLSESTVS…PCAAEETKLP (110 aa)). K2350 participates in a covalent cross-link: Glycyl lysine isopeptide (Lys-Gly) (interchain with G-Cter in ubiquitin). Residues 2351-2371 (TFGSSESSAVDSGTATASPDQ) are compositionally biased toward polar residues. The segment at 2351–2407 (TFGSSESSAVDSGTATASPDQPSDDGDAGSDVESYSSMPPLEGEPGDPDLSDGSWST) is disordered. The interval 2354 to 2377 (SSESSAVDSGTATASPDQPSDDGD) is V3. A phosphoserine; by host mark is found at S2448 and S2461. A RdRp catalytic domain is found at 2633–2751 (PMGFAYDTRC…ICESAGTQED (119 aa)). Residues D2639, D2737, and D2738 each coordinate Mg(2+). The helical transmembrane segment at 2990 to 3010 (WFMWCLLLLSVGVGIYLLPNR) threads the bilayer.

This sequence belongs to the hepacivirus polyprotein family. Homooligomer. Interacts with E1 (via C-terminus). Interacts with the non-structural protein 5A. Interacts (via N-terminus) with host STAT1 (via SH2 domain); this interaction results in decreased STAT1 phosphorylation and ubiquitin-mediated proteasome-dependent STAT1 degradation, leading to decreased IFN-stimulated gene transcription. Interacts with host STAT3; this interaction constitutively activates STAT3. Interacts with host LTBR receptor. Interacts with host TNFRSF1A receptor and possibly induces apoptosis. Interacts with host HNRPK. Interacts with host YWHAE. Interacts with host UBE3A/E6AP. Interacts with host DDX3X. Interacts with host APOA2. Interacts with host RXRA protein. Interacts with host SP110 isoform 3/Sp110b; this interaction sequesters the transcriptional corepressor SP110 away from the nucleus. Interacts with host CREB3 nuclear transcription protein; this interaction triggers cell transformation. Interacts with host ACY3. Interacts with host C1QR1. Interacts with host RBM24; this interaction, which enhances the interaction of the mature core protein with 5'-UTR, may inhibit viral translation and favor replication. Interacts with host EIF2AK2/PKR; this interaction induces the autophosphorylation of EIF2AK2. Part of the viral assembly initiation complex composed of NS2, E1, E2, NS3, NS4A, NS5A and the mature core protein. In terms of assembly, forms a heterodimer with envelope glycoprotein E2. Interacts with mature core protein. Interacts with protease NS2. The heterodimer E1/E2 interacts with host CLDN1; this interaction plays a role in viral entry into host cell. Interacts with host SPSB2 (via C-terminus). Part of the viral assembly initiation complex composed of NS2, E1, E2, NS3, NS4A, NS5A and the mature core protein. Interacts with human PLSCR1. Interacts with host NEURL3; this interaction prevents E1 binding to glycoprotein E2. As to quaternary structure, forms a heterodimer with envelope glycoprotein E1. Interacts with host CD81 and SCARB1 receptors; these interactions play a role in viral entry into host cell. Interacts with host EIF2AK2/PKR; this interaction inhibits EIF2AK2 and probably allows the virus to evade the innate immune response. Interacts with host CD209/DC-SIGN and CLEC4M/DC-SIGNR. Interact with host SPCS1; this interaction is essential for viral particle assembly. Interacts with protease NS2. The heterodimer E1/E2 interacts with host CLDN1; this interaction plays a role in viral entry into host cell. Part of the viral assembly initiation complex composed of NS2, E1, E2, NS3, NS4A, NS5A and the mature core protein. Interacts with host SLC3A2/4F2hc; the interaction may facilitate viral entry into host cell. Interacts with human PLSCR1. Homohexamer. Homoheptamer. Interacts with protease NS2. In terms of assembly, homodimer. Interacts with host SPCS1; this interaction is essential for viral particle assembly. Interacts with envelope glycoprotein E1. Interacts with envelope glycoprotein E2. Interacts with viroporin p7. Interacts with serine protease/helicase NS3. Part of the replication complex composed of NS2, NS3, NS4A, NS4B, NS5A and the RNA-directed RNA polymerase embedded in an ER-derived membranous web. Part of the viral assembly initiation complex composed of NS2, E1, E2, NS3, NS4A, NS5A and the mature core protein. As to quaternary structure, interacts with protease NS2. Interacts with non-structural protein 4A; this interaction stabilizes the folding of NS3 serine protease. NS3-NS4A interaction is essential for NS3 activation and allows membrane anchorage of the latter. NS3/NS4A complex also prevents phosphorylation of host IRF3, thus preventing the establishment of dsRNA induced antiviral state. Interacts with host MAVS; this interaction leads to the cleavage and inhibition of host MAVS. Interacts with host TICAM1; this interaction leads to the cleavage and inhibition of host TICAM1. Interacts with host TANK-binding kinase/TBK1; this interaction results in the inhibition of the association between TBK1 and IRF3, which leads to the inhibition of IRF3 activation. Interacts with host RBM24. Part of the replication complex composed of NS2, NS3, NS4A, NS4B, NS5A and the RNA-directed RNA polymerase embedded in an ER-derived membranous web. Part of the viral assembly initiation complex composed of NS2, E1, E2, NS3, NS4A, NS5A and the mature core protein. Monomer. Homodimer; dimerization is required for RNA-binding. Interacts with the mature core protein. Interacts with host GRB2. Interacts with host BIN1. Interacts with host PIK3R1. Interacts with host SRCAP. Interacts with host FKBP8. Interacts with host VAPB. Interacts with host EIF2AK2/PKR; this interaction leads to disruption of EIF2AK2 dimerization by NS5A and probably allows the virus to evade the innate immune response. Interacts (via N-terminus) with host PACSIN2 (via N-terminus); this interaction attenuates protein kinase C alpha-mediated phosphorylation of PACSIN2 by disrupting the interaction between PACSIN2 and PRKCA. Interacts (via N-terminus) with host SRC kinase (via SH2 domain). Interacts with most Src-family kinases. Interacts with host IFI27 and SKP2; promotes the ubiquitin-mediated proteasomal degradation of NS5A. Interacts (via N-terminus) with non-structural protein 4A. Interacts with non-structural protein 4B. Interacts with RNA-directed RNA polymerase. Part of the replication complex composed of NS2, NS3, NS4A, NS4B, NS5A and the RNA-directed RNA polymerase embedded in an ER-derived membranous web. Interacts with host GPS2. Interacts with host TNFRSF21; this interaction allows the modulation by the virus of JNK, p38 MAPK, STAT3, and Akt signaling pathways in a DR6-dependent manner. Interacts (via N-terminus) with host CIDEB (via N-terminus); this interaction seems to regulate the association of HCV particles with APOE. Interacts with host CHKA/Choline Kinase-alpha; CHKA bridges host PI4KA and NS5A and potentiates NS5A-stimulated PI4KA activity, which then facilitates the targeting of the ternary complex to the ER for viral replication. Interacts with host SPSB2 (via C-terminus); this interaction targets NS5A for ubiquitination and degradation. Part of the viral assembly initiation complex composed of NS2, E1, E2, NS3, NS4A, NS5A and the mature core protein. Requires Zn(2+) as cofactor. Mg(2+) serves as cofactor. Post-translationally, specific enzymatic cleavages in vivo yield mature proteins. The structural proteins, core, E1, E2 and p7 are produced by proteolytic processing by host signal peptidases. The core protein precursor is synthesized as a 23 kDa, which is retained in the ER membrane through the hydrophobic signal peptide. Cleavage by the signal peptidase releases the 21 kDa mature core protein. The cleavage of the core protein precursor occurs between aminoacids 176 and 188 but the exact cleavage site is not known. Some degraded forms of the core protein appear as well during the course of infection. The other proteins (p7, NS2, NS3, NS4A, NS4B, NS5A and NS5B) are cleaved by the viral proteases. Autoprocessing between NS2 and NS3 is mediated by the NS2 cysteine protease catalytic domain and regulated by the NS3 N-terminal domain. In terms of processing, phosphorylated by host PKC and PKA. Ubiquitinated; mediated by UBE3A and leading to core protein subsequent proteasomal degradation. Post-translationally, highly N-glycosylated. In terms of processing, palmitoylation is required for NS2/3 autoprocessing and E2 recruitment to membranes. Palmitoylated. This modification may play a role in its polymerization or in protein-protein interactions. Post-translationally, cleaved by host caspases which are probably activated by the viral infection. In terms of processing, ubiquitinated. Ubiquitination, most probably at Lys-2350, mediated by host IFI27 and SKP2 leads to proteasomal degradation, restricting viral infection. Ubiquitination by host TRIM22 leads to interruption of viral replication. Phosphorylated on serines in a basal form termed p56. p58 is a hyperphosphorylated form of p56. p56 and p58 coexist in the cell in roughly equivalent amounts. Hyperphosphorylation is dependent on the presence of NS4A. Host CSNK1A1/CKI-alpha or RPS6KB1 kinases may be responsible for NS5A phosphorylation. Post-translationally, tyrosine phosphorylation is essential for the interaction with host SRC. In terms of processing, the N-terminus is phosphorylated by host PRK2/PKN2.

The protein localises to the host endoplasmic reticulum membrane. It is found in the host mitochondrion membrane. The protein resides in the virion. It localises to the host cytoplasm. Its subcellular location is the host nucleus. The protein localises to the host lipid droplet. It is found in the virion membrane. The protein resides in the host mitochondrion. It localises to the host cell membrane. Its subcellular location is the host perinuclear region. It carries out the reaction Hydrolysis of four peptide bonds in the viral precursor polyprotein, commonly with Asp or Glu in the P6 position, Cys or Thr in P1 and Ser or Ala in P1'.. It catalyses the reaction a ribonucleoside 5'-triphosphate + H2O = a ribonucleoside 5'-diphosphate + phosphate + H(+). The enzyme catalyses ATP + H2O = ADP + phosphate + H(+). The catalysed reaction is RNA(n) + a ribonucleoside 5'-triphosphate = RNA(n+1) + diphosphate. With respect to regulation, inhibited by the antiviral drug hexamethylene amiloride. Inhibition by amantadine appears to be genotype-dependent. Also inhibited by long-alkyl-chain iminosugar derivatives. Its activity is regulated as follows. Activity is up-regulated by PRK2/PKN2-mediated phosphorylation. Packages viral RNA to form a viral nucleocapsid, and promotes virion budding. Participates in the viral particle production as a result of its interaction with the non-structural protein 5A. Binds RNA and may function as a RNA chaperone to induce the RNA structural rearrangements taking place during virus replication. Modulates viral translation initiation by interacting with viral IRES and 40S ribosomal subunit. Affects various cell signaling pathways, host immunity and lipid metabolism. Prevents the establishment of cellular antiviral state by blocking the interferon-alpha/beta (IFN-alpha/beta) and IFN-gamma signaling pathways and by blocking the formation of phosphorylated STAT1 and promoting ubiquitin-mediated proteasome-dependent degradation of STAT1. Activates STAT3 leading to cellular transformation. Regulates the activity of cellular genes, including c-myc and c-fos. May repress the promoter of p53, and sequester CREB3 and SP110 isoform 3/Sp110b in the cytoplasm. Represses cell cycle negative regulating factor CDKN1A, thereby interrupting an important check point of normal cell cycle regulation. Targets transcription factors involved in the regulation of inflammatory responses and in the immune response: suppresses NF-kappa-B activation, and activates AP-1. Binds to dendritic cells (DCs) via C1QR1, resulting in down-regulation of T-lymphocytes proliferation. Alters lipid metabolism by interacting with hepatocellular proteins involved in lipid accumulation and storage. Induces up-regulation of FAS promoter activity, and thereby contributes to the increased triglyceride accumulation in hepatocytes (steatosis). In terms of biological role, forms a heterodimer with envelope glycoprotein E2, which mediates virus attachment to the host cell, virion internalization through clathrin-dependent endocytosis and fusion with host membrane. Fusion with the host cell is most likely mediated by both E1 and E2, through conformational rearrangements of the heterodimer required for fusion rather than a classical class II fusion mechanism. E1/E2 heterodimer binds host apolipoproteins such as APOB and APOE thereby forming a lipo-viro-particle (LVP). APOE associated to the LVP allows the initial virus attachment to cell surface receptors such as the heparan sulfate proteoglycans (HSPGs), syndecan-1 (SDC1), syndecan-1 (SDC2), the low-density lipoprotein receptor (LDLR) and scavenger receptor class B type I (SCARB1). The cholesterol transfer activity of SCARB1 allows E2 exposure and binding of E2 to SCARB1 and the tetraspanin CD81. E1/E2 heterodimer binding on CD81 activates the epithelial growth factor receptor (EGFR) signaling pathway. Diffusion of the complex E1-E2-EGFR-SCARB1-CD81 to the cell lateral membrane allows further interaction with Claudin 1 (CLDN1) and occludin (OCLN) to finally trigger HCV entry. Functionally, forms a heterodimer with envelope glycoprotein E1, which mediates virus attachment to the host cell, virion internalization through clathrin-dependent endocytosis and fusion with host membrane. Fusion with the host cell is most likely mediated by both E1 and E2, through conformational rearrangements of the heterodimer required for fusion rather than a classical class II fusion mechanism. The interaction between envelope glycoprotein E2 and host apolipoprotein E/APOE allows the proper assembly, maturation and infectivity of the viral particles. This interaction is probably promoted via the up-regulation of cellular autophagy by the virus. E1/E2 heterodimer binds host apolipoproteins such as APOB and APOE thereby forming a lipo-viro-particle (LVP). APOE associated to the LVP allows the initial virus attachment to cell surface receptors such as the heparan sulfate proteoglycans (HSPGs), syndecan-1 (SDC1), syndecan-1 (SDC2), the low-density lipoprotein receptor (LDLR) and scavenger receptor class B type I (SCARB1). The cholesterol transfer activity of SCARB1 allows E2 exposure and binding of E2 to SCARB1 and the tetraspanin CD81. E1/E2 heterodimer binding on CD81 activates the epithelial growth factor receptor (EGFR) signaling pathway. Diffusion of the complex E1-E2-EGFR-SCARB1-CD81 to the cell lateral membrane allows further interaction with Claudin 1 (CLDN1) and occludin (OCLN) to finally trigger HCV entry. Inhibits host EIF2AK2/PKR activation, preventing the establishment of an antiviral state. Viral ligand for CD209/DC-SIGN and CLEC4M/DC-SIGNR, which are respectively found on dendritic cells (DCs), and on liver sinusoidal endothelial cells and macrophage-like cells of lymph node sinuses. These interactions allow the capture of circulating HCV particles by these cells and subsequent facilitated transmission to permissive cells such as hepatocytes and lymphocyte subpopulations. The interaction between E2 and host amino acid transporter complex formed by SLC3A2 and SLC7A5/LAT1 may facilitate viral entry into host cell. Its function is as follows. Ion channel protein that acts as a viroporin and plays an essential role in the assembly, envelopment and secretion of viral particles. Regulates the host cell secretory pathway, which induces the intracellular retention of viral glycoproteins and favors assembly of viral particles. Creates a pore in acidic organelles and releases Ca(2+) and H(+) in the cytoplasm of infected cells, leading to a productive viral infection. High levels of cytoplasmic Ca(2+) may trigger membrane trafficking and transport of viral ER-associated proteins to viroplasms, sites of viral genome replication. This ionic imbalance induces the assembly of the inflammasome complex, which triggers the maturation of pro-IL-1beta into IL-1beta through the action of caspase-1. Targets also host mitochondria and induces mitochondrial depolarization. In addition of its role as a viroporin, acts as a lipid raft adhesion factor. Cysteine protease required for the proteolytic auto-cleavage between the non-structural proteins NS2 and NS3. The N-terminus of NS3 is required for the function of NS2 protease (active region NS2-3). Promotes the initiation of viral particle assembly by mediating the interaction between structural and non-structural proteins. In terms of biological role, displays three enzymatic activities: serine protease with a chymotrypsin-like fold, NTPase and RNA helicase. NS3 serine protease, in association with NS4A, is responsible for the cleavages of NS3-NS4A, NS4A-NS4B, NS4B-NS5A and NS5A-NS5B. The NS3/NS4A complex prevents phosphorylation of host IRF3, thus preventing the establishment of dsRNA induced antiviral state. The NS3/NS4A complex induces host amino acid transporter component SLC3A2, thus contributing to HCV propagation. NS3 RNA helicase binds to RNA and unwinds both dsDNA and dsRNA in the 3' to 5' direction, and likely resolves RNA complicated stable secondary structures in the template strand. Binds a single ATP and catalyzes the unzipping of a single base pair of dsRNA. Inhibits host antiviral proteins TBK1 and IRF3 thereby preventing the establishment of an antiviral state. Cleaves host MAVS/CARDIF thereby preventing the establishment of an antiviral state. Cleaves host TICAM1/TRIF, thereby disrupting TLR3 signaling and preventing the establishment of an antiviral state. Functionally, peptide cofactor which forms a non-covalent complex with the N-terminal of NS3 serine protease. The NS3/NS4A complex prevents phosphorylation of host IRF3, thus preventing the establishment of dsRNA induced antiviral state. The NS3/NS4A complex induces host amino acid transporter component SLC3A2, thus contributing to HCV propagation. Its function is as follows. Induces a specific membrane alteration that serves as a scaffold for the virus replication complex. This membrane alteration gives rise to the so-called ER-derived membranous web that contains the replication complex. NS4B self-interaction contributes to its function in membranous web formation. Promotes host TRIF protein degradation in a CASP8-dependent manner thereby inhibiting host TLR3-mediated interferon signaling. Disrupts the interaction between STING and TBK1 contributing to the inhibition of interferon signaling. Phosphorylated protein that is indispensable for viral replication and assembly. Both hypo- and hyperphosphorylated states are required for the viral life cycle. The hyperphosphorylated form of NS5A is an inhibitor of viral replication. Involved in RNA-binding and especially in binding to the viral genome. Zinc is essential for RNA-binding. Participates in the viral particle production as a result of its interaction with the viral mature core protein. Its interaction with host VAPB may target the viral replication complex to vesicles. Down-regulates viral IRES translation initiation. Mediates interferon resistance, presumably by interacting with and inhibiting host EIF2AK2/PKR. Prevents BIN1-induced apoptosis. Acts as a transcriptional activator of some host genes important for viral replication when localized in the nucleus. Via the interaction with host PACSIN2, modulates lipid droplet formation in order to promote virion assembly. Modulates TNFRSF21/DR6 signaling pathway for viral propagation. In terms of biological role, RNA-dependent RNA polymerase that performs primer-template recognition and RNA synthesis during viral replication. Initiates RNA transcription/replication at a flavin adenine dinucleotide (FAD), resulting in a 5'- FAD cap on viral RNAs. In this way, recognition of viral 5' RNA by host pattern recognition receptors can be bypassed, thereby evading activation of antiviral pathways. This is Genome polyprotein from Hepatitis C virus genotype 1b (isolate Con1) (HCV).